Reading from the N-terminus, the 407-residue chain is Argininosuccinate synthase (407 aa).

ATP is bound by residues alanine 12–serine 20 and alanine 39. L-citrulline-binding residues include tyrosine 92 and serine 97. Glycine 122 is an ATP binding site. Positions 124, 128, and 129 each coordinate L-aspartate. Residue asparagine 128 coordinates L-citrulline. Residues arginine 132, serine 182, serine 191, glutamate 267, and tyrosine 279 each coordinate L-citrulline.

This sequence belongs to the argininosuccinate synthase family. Type 1 subfamily. In terms of assembly, homotetramer.

It is found in the cytoplasm. It catalyses the reaction L-citrulline + L-aspartate + ATP = 2-(N(omega)-L-arginino)succinate + AMP + diphosphate + H(+). It participates in amino-acid biosynthesis; L-arginine biosynthesis; L-arginine from L-ornithine and carbamoyl phosphate: step 2/3. The chain is Argininosuccinate synthase from Campylobacter fetus subsp. fetus (strain 82-40).